A 54-amino-acid polypeptide reads, in one-letter code: Metallothionein-2 (54 aa).

The protein belongs to the metallothionein superfamily. Type 11 family.

The polypeptide is Metallothionein-2 (MTP2) (Yarrowia lipolytica (strain CLIB 122 / E 150) (Yeast)).